A 543-amino-acid polypeptide reads, in one-letter code: MSDRVHERSMGMEEEGSTKNMKTKVLELPTKIKKILKNIWKVGKDDPRRVKHALKVGVSLTLVSLLYLMEPLFKGIGNSAIWAVMTVVVVLEFSAGATLCKGLNRGLGTLIAGSLAFFIEFVANDSGKIFRAIFIGAAVFIIGALITYLRFIPYIKKNYDYGMLIFLLTFNLITVSSYRVDTVIKIAHERFYTIAMGVGICLLMSLLVFPIWSGEDLHKSTVAKLQGLSYSIEACVNEYFEEEEKDEETSDLSEDTIYNGYKTVLDSKSADEALAMYASWEPRHTRHCHRFPWKHYVKVGSVLRQFGYTVVALHGCLKTEIQTPRPLRGLFKDPCVRLAGEICKVLSELAASIRNRRHCSPEILSDSLQVALQDLNTAIKSQPKLFLGSSQNGNVSQGNSGRHNPNVAVSQHINKDTNEAASYQNTGTPRGERMSRFGPNVSFSRLRADTLERRSAAATNERKILRQQLSRIVVLTSLEFSEALPFAAFASLLVEMVARLDNVIEEVEELGTIACFKDYDNNVDQKDVEVRVEKPADLVVGVE.

A run of 6 helical transmembrane segments spans residues 56 to 76, 80 to 100, 106 to 126, 129 to 149, 164 to 184, and 191 to 211; these read VGVSLTLVSLLYLMEPLFKGI, AIWAVMTVVVVLEFSAGATLC, GLGTLIAGSLAFFIEFVANDS, IFRAIFIGAAVFIIGALITYL, LIFLLTFNLITVSSYRVDTVI, and FYTIAMGVGICLLMSLLVFPI. Positions 416-438 are disordered; it reads DTNEAASYQNTGTPRGERMSRFG. The span at 419 to 428 shows a compositional bias: polar residues; that stretch reads EAASYQNTGT. Residues 445-472 adopt a coiled-coil conformation; the sequence is RLRADTLERRSAAATNERKILRQQLSRI.

This sequence belongs to the aromatic acid exporter (TC 2.A.85) family.

Its subcellular location is the membrane. Malate transporter. The polypeptide is Aluminum-activated malate transporter 14 (ALMT14) (Arabidopsis thaliana (Mouse-ear cress)).